The following is a 169-amino-acid chain: Nucleoside diphosphate kinase 3-A (169 aa).

ADP is bound by residues K29, R105, T111, R122, V129, and N132. The active-site Pros-phosphohistidine intermediate is the H135.

This sequence belongs to the NDK family. Homohexamer. The cofactor is Mg(2+).

The protein localises to the mitochondrion outer membrane. It is found in the cytoplasm. The protein resides in the cytoskeleton. Its subcellular location is the cilium basal body. It catalyses the reaction a 2'-deoxyribonucleoside 5'-diphosphate + ATP = a 2'-deoxyribonucleoside 5'-triphosphate + ADP. The catalysed reaction is a ribonucleoside 5'-diphosphate + ATP = a ribonucleoside 5'-triphosphate + ADP. Its function is as follows. Catalyzes the phosphorylation of ribonucleosides and deoxyribonucleoside diphosphates, other than ATP, into the corresponding triphosphates with ATP as the major phosphate donor. The ATP gamma phosphate is transferred to the nucleoside diphosphate beta phosphate via a ping-pong mechanism, using a phosphorylated active-site intermediate. Through the catalyzed exchange of gamma-phosphate between di- and triphosphonucleosides participates in regulation of intracellular nucleotide homeostasis. Required for ciliary function during renal development. Functionally, independently of its kinase activity, facilitates mitochondrial tethering prior to membrane fusion through its direct membrane-binding and hexamerization. Implicated in repair of both single- and double-stranded breaks in DNA, independently of its kinase activity. The polypeptide is Nucleoside diphosphate kinase 3-A (Xenopus laevis (African clawed frog)).